We begin with the raw amino-acid sequence, 313 residues long: Ribosomal protein L11 methyltransferase (313 aa).

The S-adenosyl-L-methionine site is built by Thr-164, Gly-185, Asp-207, and Asn-249.

The protein belongs to the methyltransferase superfamily. PrmA family.

Its subcellular location is the cytoplasm. It carries out the reaction L-lysyl-[protein] + 3 S-adenosyl-L-methionine = N(6),N(6),N(6)-trimethyl-L-lysyl-[protein] + 3 S-adenosyl-L-homocysteine + 3 H(+). Methylates ribosomal protein L11. The polypeptide is Ribosomal protein L11 methyltransferase (Clostridium perfringens (strain ATCC 13124 / DSM 756 / JCM 1290 / NCIMB 6125 / NCTC 8237 / Type A)).